The primary structure comprises 298 residues: Bifunctional protein FolD (298 aa).

NADP(+)-binding positions include 166–168 (GRS), Ser-191, and Ile-232.

It belongs to the tetrahydrofolate dehydrogenase/cyclohydrolase family. Homodimer.

The catalysed reaction is (6R)-5,10-methylene-5,6,7,8-tetrahydrofolate + NADP(+) = (6R)-5,10-methenyltetrahydrofolate + NADPH. It carries out the reaction (6R)-5,10-methenyltetrahydrofolate + H2O = (6R)-10-formyltetrahydrofolate + H(+). It participates in one-carbon metabolism; tetrahydrofolate interconversion. In terms of biological role, catalyzes the oxidation of 5,10-methylenetetrahydrofolate to 5,10-methenyltetrahydrofolate and then the hydrolysis of 5,10-methenyltetrahydrofolate to 10-formyltetrahydrofolate. The sequence is that of Bifunctional protein FolD from Parvibaculum lavamentivorans (strain DS-1 / DSM 13023 / NCIMB 13966).